A 670-amino-acid chain; its full sequence is FAD-binding monooxygenase ausC (670 aa).

Residues 144–147 (TWYW), 156–157 (DT), and Tyr162 contribute to the FAD site. 154 to 156 (MCD) contacts NADP(+). Residues 299 to 305 (TGASAVQ) and 322 to 323 (RT) contribute to the NADP(+) site.

Belongs to the FAD-binding monooxygenase family. FAD serves as cofactor.

The enzyme catalyses preaustinoid A + AH2 + O2 = preaustinoid A1 + A + H2O. Its pathway is secondary metabolite biosynthesis; terpenoid biosynthesis. In terms of biological role, FAD-binding monooxygenase; part of the gene cluster that mediates the biosynthesis of calidodehydroaustin, a fungal meroterpenoid. The first step of the pathway is the synthesis of 3,5-dimethylorsellinic acid by the polyketide synthase ausA. 3,5-dimethylorsellinic acid is then prenylated by the polyprenyl transferase ausN. Further epoxidation by the FAD-dependent monooxygenase ausM and cyclization by the probable terpene cyclase ausL lead to the formation of protoaustinoid A. Protoaustinoid A is then oxidized to spiro-lactone preaustinoid A3 by the combined action of the FAD-binding monooxygenases ausB and ausC, and the dioxygenase ausE. Acid-catalyzed keto-rearrangement and ring contraction of the tetraketide portion of preaustinoid A3 by ausJ lead to the formation of preaustinoid A4. The aldo-keto reductase ausK, with the help of ausH, is involved in the next step by transforming preaustinoid A4 into isoaustinone which is in turn hydroxylated by the P450 monooxygenase ausI to form austinolide. The cytochrome P450 monooxygenase ausG modifies austinolide to austinol. Austinol is further acetylated to austin by the O-acetyltransferase ausP, which spontaneously changes to dehydroaustin. The cytochrome P450 monooxygenase ausR then converts dehydroaustin is into 7-dehydrodehydroaustin. The hydroxylation catalyzed by ausR permits the O-acetyltransferase ausQ to add an additional acetyl group to the molecule, leading to the formation of acetoxydehydroaustin. The short chain dehydrogenase ausT catalyzes the reduction of the double bond present between carbon atoms 1 and 2 to convert 7-dehydrodehydroaustin into 1,2-dihydro-7-hydroxydehydroaustin. AusQ catalyzes not only an acetylation reaction but also the addition of the PKS ausV diketide product to 1,2-dihydro-7-hydroxydehydroaustin, forming precalidodehydroaustin. Finally, the iron/alpha-ketoglutarate-dependent dioxygenase converts precalidodehydroaustin into calidodehydroaustin. The chain is FAD-binding monooxygenase ausC from Aspergillus calidoustus.